The primary structure comprises 496 residues: Glycerol kinase 2 (496 aa).

Thr-11 serves as a coordination point for ADP. Positions 11, 12, and 13 each coordinate ATP. Thr-11 is a sn-glycerol 3-phosphate binding site. Arg-15 provides a ligand contact to ADP. The sn-glycerol 3-phosphate site is built by Arg-81, Glu-82, Tyr-133, and Asp-242. Glycerol is bound by residues Arg-81, Glu-82, Tyr-133, Asp-242, and Gln-243. 2 residues coordinate ADP: Thr-264 and Gly-307. Positions 264, 307, 311, and 408 each coordinate ATP. ADP-binding residues include Gly-408 and Asn-412.

Belongs to the FGGY kinase family.

It carries out the reaction glycerol + ATP = sn-glycerol 3-phosphate + ADP + H(+). Its pathway is polyol metabolism; glycerol degradation via glycerol kinase pathway; sn-glycerol 3-phosphate from glycerol: step 1/1. With respect to regulation, inhibited by fructose 1,6-bisphosphate (FBP). Functionally, key enzyme in the regulation of glycerol uptake and metabolism. Catalyzes the phosphorylation of glycerol to yield sn-glycerol 3-phosphate. This chain is Glycerol kinase 2, found in Thermotoga maritima (strain ATCC 43589 / DSM 3109 / JCM 10099 / NBRC 100826 / MSB8).